Consider the following 155-residue polypeptide: Archaemetzincin (155 aa).

Zn(2+) is bound at residue H109. The active-site Proton acceptor is E110. Zn(2+)-binding residues include H113, H119, C120, C125, C144, and C147.

The protein belongs to the peptidase M54 family. In terms of assembly, monomer. Zn(2+) is required as a cofactor.

Probable zinc metalloprotease whose natural substrate is unknown. This Pyrobaculum aerophilum (strain ATCC 51768 / DSM 7523 / JCM 9630 / CIP 104966 / NBRC 100827 / IM2) protein is Archaemetzincin.